The following is a 196-amino-acid chain: Cyclin-dependent kinase inhibitor 6 (196 aa).

Disordered regions lie at residues 1–36 and 55–151; these read MSER…PDSH and ASDE…RKTP. Residues 124 to 139 show a composition bias toward low complexity; the sequence is SEGLGETTTEMESSSA. At threonine 152 the chain carries Phosphothreonine; by KIN10.

The protein belongs to the CDI family. ICK/KRP subfamily. Specifically interacts with CDKA-1, but not with CDKB1-1. Interacts with CYCD1-1, CYCD4-1 and RHF1A. Binds to FBL17. Interacts with KIN10. Interacts with CYCD3-1. Ubiquitinated by RHF1A and SCF(FBL17). Ubiquitination leads to its subsequent degradation, thus controlling cell cycle progression. Post-translationally, the phosphorylation at Thr-152 by KIN10 represses its activity. In terms of tissue distribution, expressed in newly formed organs such as the shoot apex. Expressed in cotyledon, primary root and marginal region of the leaves as well as in developing pollen.

Its subcellular location is the nucleus. The protein resides in the nucleoplasm. Its activity is regulated as follows. Down-regulated by KIN10 under a phosphorylation-dependent manner. Binds and inhibits CYCD2-1/CDKA-1 complex kinase activity. Regulates cell division which is crucial for plant growth, development and morphogenesis. May inhibit CDK kinases specifically involved in the G1/S phase transition. The protein is Cyclin-dependent kinase inhibitor 6 (KRP6) of Arabidopsis thaliana (Mouse-ear cress).